We begin with the raw amino-acid sequence, 127 residues long: Glycine cleavage system H protein (127 aa).

A Lipoyl-binding domain is found at 22–104; it reads KVRIGITHFA…YEKAWMIVVE (83 aa). K63 carries the N6-lipoyllysine modification.

This sequence belongs to the GcvH family. The glycine cleavage system is composed of four proteins: P, T, L and H. Requires (R)-lipoate as cofactor.

In terms of biological role, the glycine cleavage system catalyzes the degradation of glycine. The H protein shuttles the methylamine group of glycine from the P protein to the T protein. Its function is as follows. Is also involved in protein lipoylation via its role as an octanoyl/lipoyl carrier protein intermediate. The sequence is that of Glycine cleavage system H protein from Bacillus pumilus (strain SAFR-032).